The sequence spans 523 residues: Calcium uptake protein 3, mitochondrial (523 aa).

The N-terminal 6 residues, 1-6 (MAALRR), are a transit peptide targeting the mitochondrion. Residues 18-48 (LAPQQPFLSPWGRPAGTAPGMSGRPFSGREE) form a disordered region. One can recognise an EF-hand 1 domain in the interval 225 to 260 (KPHAGFRIAFNMFDTDGNEMVDKKEFLVLQEIFRKK). Ca(2+) is bound by residues D238, D240, N242, M244, D246, and E249. An EF-hand 2; degenerate domain is found at 414 to 429 (ITFDEFRSFFQFLNNL). One can recognise an EF-hand 3 domain in the interval 463-498 (LSPHLVNTVFKIFDVDKDDQLSYKEFIGIMKDRLHR). The Ca(2+) site is built by D476, D478, D480, Q482, and E487.

Belongs to the MICU1 family. MICU3 subfamily. In terms of assembly, heterodimer; disulfide-linked; heterodimerizes with MICU1. Component of the uniplex complex, composed of MCU, EMRE/SMDT1, MICU1 and MICU3 in a 4:4:1:1 stoichiometry.

The protein resides in the mitochondrion intermembrane space. Its subcellular location is the mitochondrion inner membrane. Functionally, tissue-specific calcium sensor of the mitochondrial calcium uniporter (MCU) channel, which specifically regulates MCU channel activity in the central nervous system and skeletal muscle. Senses calcium level via its EF-hand domains: compared to MICU1 and MICU2, MICU3 has a higher affinity for calcium. MICU1 and MICU3 form a disulfide-linked heterodimer that stimulates and inhibits MCU activity, depending on the concentration of calcium. At low calcium levels, MICU1 occludes the pore of the MCU channel, preventing mitochondrial calcium uptake. At higher calcium levels, calcium-binding to MICU1 and MICU3 induces a conformational change that weakens MCU-MICU1 interactions and moves the MICU1-MICU3 heterodimer away from the pore, allowing calcium permeation through the MCU channel. The high calcium affinity of MICU3 lowers the calcium threshold necessary for calcium permeation through the MCU channel. The MICU1-MICU3 heterodimer promotes flexibility of neurotransmission in neuronal cells by enhancing mitochondrial calcium uptake in presynapses. It is also required to increase mitochondrial calcium uptake in skeletal muscle cells, thereby increasing ATP production. The chain is Calcium uptake protein 3, mitochondrial from Rattus norvegicus (Rat).